Here is a 391-residue protein sequence, read N- to C-terminus: Bifunctional enzyme IspD/IspF (391 aa).

A 2-C-methyl-D-erythritol 4-phosphate cytidylyltransferase region spans residues 1-230 (MLAAGRGKRA…KKKMQMFPDI (230 aa)). A 2-C-methyl-D-erythritol 2,4-cyclodiphosphate synthase region spans residues 231–391 (RTGNGYDVHS…TVLYPGEIPK (161 aa)). The a divalent metal cation site is built by D237 and H239. Residues 237 to 239 (DVH) and 263 to 264 (HS) contribute to the 4-CDP-2-C-methyl-D-erythritol 2-phosphate site. H271 serves as a coordination point for a divalent metal cation. 4-CDP-2-C-methyl-D-erythritol 2-phosphate-binding positions include 285 to 287 (DIG), 361 to 364 (TTNE), F368, and R371.

It in the N-terminal section; belongs to the IspD/TarI cytidylyltransferase family. IspD subfamily. The protein in the C-terminal section; belongs to the IspF family. Requires a divalent metal cation as cofactor.

It carries out the reaction 2-C-methyl-D-erythritol 4-phosphate + CTP + H(+) = 4-CDP-2-C-methyl-D-erythritol + diphosphate. The enzyme catalyses 4-CDP-2-C-methyl-D-erythritol 2-phosphate = 2-C-methyl-D-erythritol 2,4-cyclic diphosphate + CMP. It functions in the pathway isoprenoid biosynthesis; isopentenyl diphosphate biosynthesis via DXP pathway; isopentenyl diphosphate from 1-deoxy-D-xylulose 5-phosphate: step 2/6. The protein operates within isoprenoid biosynthesis; isopentenyl diphosphate biosynthesis via DXP pathway; isopentenyl diphosphate from 1-deoxy-D-xylulose 5-phosphate: step 4/6. Bifunctional enzyme that catalyzes the formation of 4-diphosphocytidyl-2-C-methyl-D-erythritol from CTP and 2-C-methyl-D-erythritol 4-phosphate (MEP) (IspD), and catalyzes the conversion of 4-diphosphocytidyl-2-C-methyl-D-erythritol 2-phosphate (CDP-ME2P) to 2-C-methyl-D-erythritol 2,4-cyclodiphosphate (ME-CPP) with a corresponding release of cytidine 5-monophosphate (CMP) (IspF). This Bartonella quintana (strain Toulouse) (Rochalimaea quintana) protein is Bifunctional enzyme IspD/IspF.